The chain runs to 567 residues: Thiol:disulfide interchange protein DsbD (567 aa).

The signal sequence occupies residues 1–19 (MAQRIFTLILLLCSTSAFA). Intrachain disulfides connect Cys122/Cys128 and Cys185/Cys307. A run of 8 helical transmembrane segments spans residues 166–186 (LPFS…TPCV), 210–230 (LLLA…LGLV), 246–266 (YVLI…FGLF), 299–319 (IAGL…LLYI), 326–346 (WLGG…LMLV), 360–380 (WMAH…VFLL), 387–407 (AWGL…AFIT), and 418–438 (IVQI…QDWA). In terms of domain architecture, Thioredoxin spans 435-567 (QDWAFGSPSA…FSAHLHDRQP (133 aa)). The cysteines at positions 482 and 485 are disulfide-linked.

The protein belongs to the thioredoxin family. DsbD subfamily.

Its subcellular location is the cell inner membrane. It carries out the reaction [protein]-dithiol + NAD(+) = [protein]-disulfide + NADH + H(+). The catalysed reaction is [protein]-dithiol + NADP(+) = [protein]-disulfide + NADPH + H(+). Its function is as follows. Required to facilitate the formation of correct disulfide bonds in some periplasmic proteins and for the assembly of the periplasmic c-type cytochromes. Acts by transferring electrons from cytoplasmic thioredoxin to the periplasm. This transfer involves a cascade of disulfide bond formation and reduction steps. The polypeptide is Thiol:disulfide interchange protein DsbD (Salmonella choleraesuis (strain SC-B67)).